A 252-amino-acid chain; its full sequence is tRNA pseudouridine synthase A (252 aa).

The active-site Nucleophile is the Asp-52. Tyr-110 is a substrate binding site.

This sequence belongs to the tRNA pseudouridine synthase TruA family. In terms of assembly, homodimer.

The enzyme catalyses uridine(38/39/40) in tRNA = pseudouridine(38/39/40) in tRNA. In terms of biological role, formation of pseudouridine at positions 38, 39 and 40 in the anticodon stem and loop of transfer RNAs. The polypeptide is tRNA pseudouridine synthase A (Blochmanniella floridana).